Reading from the N-terminus, the 559-residue chain is Potassium-transporting ATPase potassium-binding subunit (559 aa).

The next 13 membrane-spanning stretches (helical) occupy residues 5–25 (GFLLIASFLLILLVLAKPLGS), 27–47 (LARLIAAVPLPGVAGIERILW), 63–83 (LLALLTLNLLGLGILFCLLFW), 132–152 (GLTVQNFLSAATGIAVVFALI), 170–190 (LVRITLWILFPVALIIALFFI), 253–273 (LAQMLAIFLIPAALCFAFGEA), 283–303 (LLWAMSFIFVVCVAVVMWAEV), 327–347 (FGVLASSLFAVVTTAASCGAV), 356–376 (ALGGMVPMWLMQIGEVVFGGV), 379–399 (GLYGMLLFVLLAVFIAGLMIG), 416–436 (MTALAILVTPMLVLLGSALAM), 484–504 (LLAFCMFVGRFGVIIPVMAIA), and 524–544 (GALFIGLLIGTVLLVGALTFI).

It belongs to the KdpA family. As to quaternary structure, the system is composed of three essential subunits: KdpA, KdpB and KdpC.

The protein localises to the cell inner membrane. Part of the high-affinity ATP-driven potassium transport (or Kdp) system, which catalyzes the hydrolysis of ATP coupled with the electrogenic transport of potassium into the cytoplasm. This subunit binds the periplasmic potassium ions and delivers the ions to the membrane domain of KdpB through an intramembrane tunnel. The sequence is that of Potassium-transporting ATPase potassium-binding subunit from Salmonella typhimurium (strain LT2 / SGSC1412 / ATCC 700720).